The primary structure comprises 453 residues: MSVVTVQLGQCGNQIGFEVFDALYSDSHCPQGLCSERENEAYQASSKERFFSEEENGVSIARAVLVDMEPKVINQTLSKAAQSGQWKYAQHSCFCQKEGSGNNWAYGYSVHGPRHEESIMNLIQKEVEKCDSLSGFFIIMSMAGGTGSGLGAFVTQNLQDQYSNSLKMNQIIWPYGTGEVIVQNYNSVLTLSHLYRSSDALLVHENDAIHKICAKLMNIKQISFSDINQVLAHQLGSVFQPTYSVEGSCHYRRNPLGDLMENLVPHPEFKMLGIRNIPQMSENSLTYSTFTWAGLLKHLRQMLISNSKMEEGINWQVRPPLPGLPTLGKVSLNRELHFNTSIANLVILRGKDVHSADLGGFKDPALYTSWLEPIDAFNVWKTQRAFSKYEKSAALVSNSQFLLKPLDTIVGKAWNMFASKAYIHQYTKFGIEEEDFLDSFTLLEQVVASYCNL.

143-149 (AGGTGSG) lines the GTP pocket.

It belongs to the tubulin family. In terms of assembly, found in a complex with TEDC1, TEDC2, TUBE1 and TUBD1.

The protein localises to the nucleus. Its subcellular location is the cytoplasm. The protein resides in the cytoskeleton. It is found in the microtubule organizing center. It localises to the centrosome. The protein localises to the centriole. Its subcellular location is the cell projection. The protein resides in the cilium. Acts as a positive regulator of hedgehog signaling and regulates ciliary function. The protein is Tubulin delta chain (TUBD1) of Canis lupus familiaris (Dog).